A 229-amino-acid chain; its full sequence is 2,3-bisphosphoglycerate-dependent phosphoglycerate mutase (229 aa).

Residues 8 to 15 (RHGESAWN), 21 to 22 (TG), arginine 60, 87 to 90 (ERHY), lysine 98, 114 to 115 (RR), and 183 to 184 (GN) contribute to the substrate site. The Tele-phosphohistidine intermediate role is filled by histidine 9. The active-site Proton donor/acceptor is the glutamate 87.

The protein belongs to the phosphoglycerate mutase family. BPG-dependent PGAM subfamily. As to quaternary structure, homodimer.

The catalysed reaction is (2R)-2-phosphoglycerate = (2R)-3-phosphoglycerate. Its pathway is carbohydrate degradation; glycolysis; pyruvate from D-glyceraldehyde 3-phosphate: step 3/5. Its function is as follows. Catalyzes the interconversion of 2-phosphoglycerate and 3-phosphoglycerate. In Polynucleobacter necessarius subsp. necessarius (strain STIR1), this protein is 2,3-bisphosphoglycerate-dependent phosphoglycerate mutase.